We begin with the raw amino-acid sequence, 523 residues long: Aldehyde oxidase GLOX (523 aa).

The first 19 residues, 1–19 (MILDAAIVALADLPGTWEL), serve as a signal peptide directing secretion.

The protein resides in the secreted. Its subcellular location is the cell wall. It carries out the reaction an aldehyde + O2 + H2O = a carboxylate + H2O2 + H(+). Catalyzes the oxidation of aldehydes to the corresponding carboxylate by coupling the reaction to the reduction of dioxygen to hydrogen peroxide. Substrates include glyoxal and other aldehydes. Involved in disease resistance against the grapevine powdery mildew E.necator. Is sufficient to confer disease resistance to E.necator. Can produce hydrogen peroxide in response to E.necator infection, and this may directly play a role in the defense mechanism during plant-pathogen interactions. The protein is Aldehyde oxidase GLOX of Vitis pseudoreticulata (Chinese wild grapevine).